Reading from the N-terminus, the 130-residue chain is Small ribosomal subunit protein uS8 (130 aa).

This sequence belongs to the universal ribosomal protein uS8 family. In terms of assembly, part of the 30S ribosomal subunit. Contacts proteins S5 and S12.

Its function is as follows. One of the primary rRNA binding proteins, it binds directly to 16S rRNA central domain where it helps coordinate assembly of the platform of the 30S subunit. In Pseudomonas entomophila (strain L48), this protein is Small ribosomal subunit protein uS8.